Reading from the N-terminus, the 346-residue chain is MEEELKLFIQVWVSAIISVTYCYYLTPKIKTSLLRLLSVLPVCVLFLIIPIFFSTVHSSFTIAFFLSGLAVPKLILFALEKGPLFPLPPNLPHFVCFACFPIKLQKKPNPENTNHFPKWVFALKVFIFGALLLQAYHYKQFLSTNFLLGLYALHIYLELEISLTLIKFLVSITLGCDLEPQFNEPYLATSLHDFWGHRWNLMVSKILWLAVYNPIRQWRAKSSEWDRFFAIFATFLVSGVAHEILYFYLTREKPTWEVTWFFVLHGFCMAAEVALKRKTKLVQRWPVNPAVSRLLTVGFVFVTGVWLFSPQPIRHGLMERFINEDLFLIDFFNRKLYILLGLFTSL.

8 helical membrane passes run 7-27 (LFIQ…YLTP), 36-56 (LLSV…FSTV), 59-79 (SFTI…LFAL), 116-136 (FPKW…LQAY), 146-166 (FLLG…LTLI), 228-248 (FFAI…LYFY), 255-275 (TWEV…EVAL), and 289-309 (PAVS…WLFS).

Belongs to the wax synthase family.

The protein localises to the membrane. It catalyses the reaction a long chain fatty alcohol + a fatty acyl-CoA = a wax ester + CoA. Catalyzes the final step in the synthesis of long-chain linear esters (waxes). The polypeptide is Probable long-chain-alcohol O-fatty-acyltransferase 6 (AT6) (Arabidopsis thaliana (Mouse-ear cress)).